Reading from the N-terminus, the 2014-residue chain is Fatty acid synthase beta subunit pigK (2014 aa).

The acetyltransferase (AT) domain stretch occupies residues L144 to I515. S263 functions as the For acetyltransferase activity in the catalytic mechanism. Positions S570–D815 are enoyl reductase (ER) domain. A dehydratase (DH) domain region spans residues R1126 to V1606. Positions P1514–T1627 constitute a MaoC-like domain. A malonyl/palmitoyl transferase (MT/PT) domain region spans residues F1645–S2005. Residue S1790 is the For malonyltransferase activity of the active site.

Belongs to the fungal fatty acid synthetase subunit beta family. [Alpha(6)beta(6)] hexamers of two multifunctional subunits (alpha and beta).

The catalysed reaction is acetyl-CoA + n malonyl-CoA + 2n NADPH + 4n H(+) = a long-chain-acyl-CoA + n CoA + n CO2 + 2n NADP(+).. The enzyme catalyses holo-[ACP] + acetyl-CoA = acetyl-[ACP] + CoA. It carries out the reaction holo-[ACP] + malonyl-CoA = malonyl-[ACP] + CoA. It catalyses the reaction a (3R)-hydroxyacyl-[ACP] = a (2E)-enoyl-[ACP] + H2O. The catalysed reaction is a 2,3-saturated acyl-[ACP] + NAD(+) = a (2E)-enoyl-[ACP] + NADH + H(+). The enzyme catalyses (9Z)-octadecenoyl-[ACP] + H2O = (9Z)-octadecenoate + holo-[ACP] + H(+). It participates in secondary metabolite biosynthesis. Functionally, fatty acid synthase subunit beta; part of the gene cluster that mediates the biosynthesis of azaphilone pigments (MonAzPs), a complex mixture of compounds with a common azaphilone skeleton very widely used as food colorants. PigJ and pigK form the two subunits of a dedicated fungal fatty acid synthase (FAS) that produces the side chain fatty acyl moiety of MonAzPs, a beta-keto fatty acid. The chain length control of the pigJ-pigK FAS is somewhat flexible as MonAzPs features either a beta-ketooctanoic or a beta-ketodecanoic acid moiety. The beta-ketoacyl-ACP probably serves as the substrate for the acetyltransferase pigD that directly transfers the fatty acyl chain to the C-4 alcohol of the pyran ring. The first step of the pathway is performed by the nrPKS pigA that forms the hexaketide precursor from successive condensations of five malonyl-CoA units, with a simple acetyl-CoA starter unit. The role of esterase pigG is not clear, but it may play at most a supplementary role in the formation of the benzaldehyde produced by the pigA nrPKS. This very reactive benzaldehyde is intercepted by the pigC ketoreductase that to provide the first stable enzyme-free MonAzPs intermediate, 6-(4-hydroxy-2-oxopentyl)-3-methyl-2,4-dioxocyclohexane carbaldehyde, also known as M7PKS-1. The FAD-dependent monooxygenase pigN hydroxylates M7PKS-1 at C-4, which triggers the formation of the pyran ring. PigJ, pigK and pigD are involved in the acetylation of the pyran ring. PigJ and pigK form the two subunits of a dedicated fungal FAS that produces the side chain fatty acyl moiety of MonAzPs and pigD transfers the fatty acyl chain to the C-4 alcohol. PigM and pigO are involved in the elimination of the omega-1 alcohol. PigM acts as an O-acetyltransferase that synthesizes the putative O-11 acetyl intermediate whereas pigO eliminates acetic acid to yield an intermediate with a C10(11) double bond. The dehydration of the C-11 alcohol followed by the reduction of the C6(7) double bond by the NAD(P)H-dependent oxidoreductase pigE increases the electrophilicity of the C-5 ketone of the resulting acyl benzopyran. This in turn sets up the C-5 ketone for an intramolecular Knoevenagel aldol condensation with the C-20 enol of the side chain. This condensation affords the characteristic linear tricyclic carbon skeletons of the yellow pigments that serve as the common precursors for the classical yellow pigments monascin and ankaflavin, orange pigments rubopunctatin and monascorubrin, and red pigments ribropunctamine and monascorubramine. The FAD-dependent oxidoreductase pigF is especially invoved in the biosynthesis of orange and red pigments via desaturation of C6(7). The sequence is that of Fatty acid synthase beta subunit pigK from Monascus ruber (Mold).